The sequence spans 247 residues: Phosphoglycerate mutase 1 (247 aa).

Residues 8–15 (RHGQSEWN) and 21–22 (TG) contribute to the substrate site. Histidine 9 serves as the catalytic Tele-phosphohistidine intermediate. Serine 12 carries the post-translational modification Phosphoserine. Lysine 31 is covalently cross-linked (Glycyl lysine isopeptide (Lys-Gly) (interchain with G-Cter in ubiquitin)). The residue at position 49 (tyrosine 49) is a Phosphotyrosine. A Glycyl lysine isopeptide (Lys-Gly) (interchain with G-Cter in ubiquitin) cross-link involves residue lysine 57. Residue arginine 60 coordinates substrate. Lysine 71 participates in a covalent cross-link: Glycyl lysine isopeptide (Lys-Gly) (interchain with G-Cter in ubiquitin). The Proton donor/acceptor role is filled by glutamate 87. Residues 87-90 (ERHY), lysine 98, and 114-115 (RR) each bind substrate. Serine 116, serine 127, and serine 128 each carry phosphoserine. Residues lysine 139 and lysine 175 each participate in a glycyl lysine isopeptide (Lys-Gly) (interchain with G-Cter in ubiquitin) cross-link. Position 183–184 (183–184 (GN)) interacts with substrate. Serine 185 bears the Phosphoserine mark. Lysine 191 participates in a covalent cross-link: Glycyl lysine isopeptide (Lys-Gly) (interchain with G-Cter in ubiquitin). The residue at position 197 (serine 197) is a Phosphoserine.

The protein belongs to the phosphoglycerate mutase family. BPG-dependent PGAM subfamily. Homotetramer: dimer of dimers.

It localises to the cytoplasm. The protein resides in the mitochondrion outer membrane. Its subcellular location is the mitochondrion intermembrane space. It catalyses the reaction (2R)-2-phosphoglycerate = (2R)-3-phosphoglycerate. It functions in the pathway carbohydrate degradation; glycolysis; pyruvate from D-glyceraldehyde 3-phosphate: step 3/5. With respect to regulation, inhibited by inositol hexakisphosphate and benzene tri-, tetra- and hexacarboxylates. In terms of biological role, interconversion of 3- and 2-phosphoglycerate with 2,3-bisphosphoglycerate as the primer of the reaction. Can also catalyze the reaction of EC 5.4.2.4 (synthase), but with a reduced activity. This Saccharomyces cerevisiae (strain ATCC 204508 / S288c) (Baker's yeast) protein is Phosphoglycerate mutase 1 (GPM1).